The primary structure comprises 31 residues: Cycloviolacin-O23 (31 aa).

Residues 1 to 31 (GLPTCGETCFGGTCNTPGCTCDSSWPICTHN) constitute a cross-link (cyclopeptide (Gly-Asn)). Intrachain disulfides connect Cys-5–Cys-19, Cys-9–Cys-21, and Cys-14–Cys-28.

Post-translationally, this is a cyclic peptide. As to expression, expressed in leaves but not in petals, petioles, roots and runners (at protein level).

Functionally, probably participates in a plant defense mechanism. This is Cycloviolacin-O23 from Viola odorata (Sweet violet).